We begin with the raw amino-acid sequence, 344 residues long: Uroporphyrinogen decarboxylase (344 aa).

Substrate contacts are provided by residues 24–28 (RQAGR), phenylalanine 43, aspartate 74, tyrosine 151, serine 206, and histidine 323.

This sequence belongs to the uroporphyrinogen decarboxylase family. Homodimer.

It is found in the cytoplasm. The catalysed reaction is uroporphyrinogen III + 4 H(+) = coproporphyrinogen III + 4 CO2. Its pathway is porphyrin-containing compound metabolism; protoporphyrin-IX biosynthesis; coproporphyrinogen-III from 5-aminolevulinate: step 4/4. Functionally, catalyzes the decarboxylation of four acetate groups of uroporphyrinogen-III to yield coproporphyrinogen-III. This Rhodobacter capsulatus (Rhodopseudomonas capsulata) protein is Uroporphyrinogen decarboxylase.